We begin with the raw amino-acid sequence, 656 residues long: Translation factor GUF1 homolog, mitochondrial (656 aa).

Residues glutamine 55–aspartate 236 form the tr-type G domain. Residues alanine 64–serine 71, aspartate 129–histidine 133, and asparagine 183–aspartate 186 contribute to the GTP site.

This sequence belongs to the TRAFAC class translation factor GTPase superfamily. Classic translation factor GTPase family. LepA subfamily.

It localises to the mitochondrion inner membrane. The enzyme catalyses GTP + H2O = GDP + phosphate + H(+). In terms of biological role, promotes mitochondrial protein synthesis. May act as a fidelity factor of the translation reaction, by catalyzing a one-codon backward translocation of tRNAs on improperly translocated ribosomes. Binds to mitochondrial ribosomes in a GTP-dependent manner. This chain is Translation factor GUF1 homolog, mitochondrial, found in Aedes aegypti (Yellowfever mosquito).